The chain runs to 210 residues: Glycerol-3-phosphate acyltransferase (210 aa).

A run of 6 helical transmembrane segments spans residues 8-28 (LILL…LLLT), 56-76 (GLAA…VLIA), 87-107 (TMAV…WLGF), 119-139 (TIWV…LLVA), 144-164 (ISSA…VLLS), and 165-185 (GRPL…LIWA).

It belongs to the PlsY family. In terms of assembly, probably interacts with PlsX.

It localises to the cell inner membrane. It carries out the reaction an acyl phosphate + sn-glycerol 3-phosphate = a 1-acyl-sn-glycero-3-phosphate + phosphate. It functions in the pathway lipid metabolism; phospholipid metabolism. Catalyzes the transfer of an acyl group from acyl-phosphate (acyl-PO(4)) to glycerol-3-phosphate (G3P) to form lysophosphatidic acid (LPA). This enzyme utilizes acyl-phosphate as fatty acyl donor, but not acyl-CoA or acyl-ACP. This chain is Glycerol-3-phosphate acyltransferase, found in Gluconobacter oxydans (strain 621H) (Gluconobacter suboxydans).